The following is a 398-amino-acid chain: Sphingosine 1-phosphate receptor 5 (398 aa).

Residues 1-40 (MESGLLRPAPVSEVIVLHYNYTGKLRGARYQPGAGLRADA) are Extracellular-facing. Asn20 carries N-linked (GlcNAc...) asparagine glycosylation. The chain crosses the membrane as a helical span at residues 41–61 (VVCLAVCAFIVLENLAVLLVL). Over 62 to 70 (GRHPRFHAP) the chain is Cytoplasmic. The helical transmembrane segment at 71–91 (MFLLLGSLTLSDLLAGAAYAA) threads the bilayer. Over 92–111 (NILLSGPLTLKLSPALWFAR) the chain is Extracellular. Residues 112 to 132 (EGGVFVALTASVLSLLAIALE) form a helical membrane-spanning segment. At 133-151 (RSLTMARRGPAPVSSRGRT) the chain is on the cytoplasmic side. The chain crosses the membrane as a helical span at residues 152–172 (LAMAAAAWGVSLLLGLLPALG). At 173–192 (WNCLGRLDACSTVLPLYAKA) the chain is on the extracellular side. The chain crosses the membrane as a helical span at residues 193 to 213 (YVLFCVLAFVGILAAICALYA). Residues 214-252 (RIYCQVRANARRLPARPGTAGTTSTRARRKPRSLALLRT) lie on the Cytoplasmic side of the membrane. A helical transmembrane segment spans residues 253 to 273 (LSVVLLAFVACWGPLFLLLLL). Residues 274–287 (DVACPARTCPVLLQ) lie on the Extracellular side of the membrane. The chain crosses the membrane as a helical span at residues 288–308 (ADPFLGLAMANSLLNPIIYTL). Topologically, residues 309–398 (TNRDLRHALL…RTLVSEPAAD (90 aa)) are cytoplasmic. Cys323 is lipidated: S-palmitoyl cysteine. Positions 329–398 (GRDPSGSQQS…RTLVSEPAAD (70 aa)) are disordered. The span at 333-347 (SGSQQSASAAEASGG) shows a compositional bias: low complexity. Ser381 carries the post-translational modification Phosphoserine.

Belongs to the G-protein coupled receptor 1 family. Widely expressed in the brain, most prominently in the corpus callosum, which is predominantly white matter. Detected in spleen, peripheral blood leukocytes, placenta, lung, aorta and fetal spleen. Low-level signal detected in many tissue extracts. Overexpressed in leukemic large granular lymphocytes. Isoform 1 is predominantly expressed in peripheral tissues. Isoform 2 is expressed in brain, spleen and peripheral blood leukocytes.

It localises to the cell membrane. Its function is as follows. Receptor for the lysosphingolipid sphingosine 1-phosphate (S1P). S1P is a bioactive lysophospholipid that elicits diverse physiological effect on most types of cells and tissues. Is coupled to both the G(i/0)alpha and G(12) subclass of heteromeric G-proteins. May play a regulatory role in the transformation of radial glial cells into astrocytes and may affect proliferative activity of these cells. This Homo sapiens (Human) protein is Sphingosine 1-phosphate receptor 5 (S1PR5).